Reading from the N-terminus, the 239-residue chain is MSDVALGVNIDHVATLRNARNVDYPDIVEVANIAVSNGADFITVHLREDRRHIKDDDVFRLKNSLKVPLNLEIAPTDEMLSIAIKVRPKCVCLVPEKRQELTTEGGLDVKRAFSYLISFIEKLHTYNIDVTLFIEPDVDQIDQAKKLSADNVELHTGKYCNNTTQSELSQVIKAAEYCYQRNIGCHAGHGLNYQSAAIIAKVPYISALNIGHFLICESVLHGIGTSVHKMKKAIASAPN.

N9 contributes to the 3-amino-2-oxopropyl phosphate binding site. 11 to 12 (DH) contacts 1-deoxy-D-xylulose 5-phosphate. Position 20 (R20) interacts with 3-amino-2-oxopropyl phosphate. The Proton acceptor role is filled by H45. Residues R47 and H52 each coordinate 1-deoxy-D-xylulose 5-phosphate. The active-site Proton acceptor is E72. Position 102 (T102) interacts with 1-deoxy-D-xylulose 5-phosphate. H189 serves as the catalytic Proton donor. Residues G190 and 211–212 (GH) each bind 3-amino-2-oxopropyl phosphate.

It belongs to the PNP synthase family. As to quaternary structure, homooctamer; tetramer of dimers.

It is found in the cytoplasm. It carries out the reaction 3-amino-2-oxopropyl phosphate + 1-deoxy-D-xylulose 5-phosphate = pyridoxine 5'-phosphate + phosphate + 2 H2O + H(+). Its pathway is cofactor biosynthesis; pyridoxine 5'-phosphate biosynthesis; pyridoxine 5'-phosphate from D-erythrose 4-phosphate: step 5/5. Functionally, catalyzes the complicated ring closure reaction between the two acyclic compounds 1-deoxy-D-xylulose-5-phosphate (DXP) and 3-amino-2-oxopropyl phosphate (1-amino-acetone-3-phosphate or AAP) to form pyridoxine 5'-phosphate (PNP) and inorganic phosphate. The protein is Pyridoxine 5'-phosphate synthase of Ehrlichia chaffeensis (strain ATCC CRL-10679 / Arkansas).